The following is a 214-amino-acid chain: MTERPKIRVLLIDNHPLVLDGLKAVLETFDHIEVAGTAGLAQTGLEIGRQILPQVVLMDINMPKLSGIDAIELFRNELPQARVVMLSMHDSREYISSSVMHGAAGYILKDVSTDEIVSAIETVAGGGTYFSSGVFDALMGERVEEGSDPLTPRERDILGLIVAGRSNKEIAETLGITSATAETHRKNLKKKLGITTTAGLIRYALDHGIVSKVG.

The Response regulatory domain occupies 8–124; the sequence is RVLLIDNHPL…EIVSAIETVA (117 aa). Asp-59 is modified (4-aspartylphosphate). The HTH luxR-type domain occupies 143 to 208; it reads VEEGSDPLTP…GLIRYALDHG (66 aa). Positions 167-186 form a DNA-binding region, H-T-H motif; that stretch reads NKEIAETLGITSATAETHRK.

Its subcellular location is the cytoplasm. Member of the two-component regulatory system MctS/MctR, which activates mctP expression. This Rhizobium johnstonii (strain DSM 114642 / LMG 32736 / 3841) (Rhizobium leguminosarum bv. viciae) protein is Transcriptional regulatory protein MctR.